Consider the following 295-residue polypeptide: uncharacterized protein (295 aa).

This is an uncharacterized protein from Acanthamoeba polyphaga (Amoeba).